Here is a 356-residue protein sequence, read N- to C-terminus: Probable farnesyl diphosphate synthase DDB_G0278823 (356 aa).

Lys55, Arg58, and Gln94 together coordinate isopentenyl diphosphate. Residues Asp101 and Asp105 each contribute to the Mg(2+) site. Arg110 is a dimethylallyl diphosphate binding site. Arg111 provides a ligand contact to isopentenyl diphosphate. Residues Lys203, Thr204, Gln243, Lys260, and Lys269 each contribute to the dimethylallyl diphosphate site.

This sequence belongs to the FPP/GGPP synthase family. The cofactor is Mg(2+).

The protein resides in the cytoplasm. It carries out the reaction isopentenyl diphosphate + dimethylallyl diphosphate = (2E)-geranyl diphosphate + diphosphate. It catalyses the reaction isopentenyl diphosphate + (2E)-geranyl diphosphate = (2E,6E)-farnesyl diphosphate + diphosphate. It participates in isoprenoid biosynthesis; farnesyl diphosphate biosynthesis; farnesyl diphosphate from geranyl diphosphate and isopentenyl diphosphate: step 1/1. Its pathway is isoprenoid biosynthesis; geranyl diphosphate biosynthesis; geranyl diphosphate from dimethylallyl diphosphate and isopentenyl diphosphate: step 1/1. Its activity is regulated as follows. Inhibited by aminobisphosphonate drugs (aBP), such as risedronate and alendronate. Functionally, key enzyme in isoprenoid biosynthesis which catalyzes the formation of farnesyl diphosphate (FPP), a sterol precursor. The protein is Probable farnesyl diphosphate synthase DDB_G0278823 of Dictyostelium discoideum (Social amoeba).